Here is a 152-residue protein sequence, read N- to C-terminus: Small ribosomal subunit protein uS15 (152 aa).

A compositionally biased stretch (basic residues) spans 1–10; it reads MARMYARRRG. The disordered stretch occupies residues 1 to 24; the sequence is MARMYARRRGTSSSVRPYRKEAPE.

This sequence belongs to the universal ribosomal protein uS15 family. In terms of assembly, part of the 30S ribosomal subunit.

The protein is Small ribosomal subunit protein uS15 of Methanoculleus marisnigri (strain ATCC 35101 / DSM 1498 / JR1).